A 305-amino-acid polypeptide reads, in one-letter code: Deoxyhypusine hydroxylase (305 aa).

HEAT-like PBS-type repeat units follow at residues 54 to 80 and 87 to 113; these read LKHE…VLKD and VRHE…YAED. Positions 56, 89, and 90 each coordinate Fe cation. Positions 137 to 160 are disordered; the sequence is EQTKDGTDENPYCSVDPAPPAQRK. 3 HEAT-like PBS-type repeats span residues 178 to 204, 209 to 235, and 242 to 268; these read DRYR…GLQC, FRHE…ALEK, and VRHE…YRKD. Residues histidine 211, histidine 244, and glutamate 245 each coordinate Fe cation.

It belongs to the deoxyhypusine hydroxylase family. It depends on Fe(2+) as a cofactor.

It carries out the reaction [eIF5A protein]-deoxyhypusine + AH2 + O2 = [eIF5A protein]-hypusine + A + H2O. Its pathway is protein modification; eIF5A hypusination. In terms of biological role, catalyzes the hydroxylation of the N(6)-(4-aminobutyl)-L-lysine intermediate produced by deoxyhypusine synthase/DHPS on a critical lysine of the eukaryotic translation initiation factor 5A/eIF-5A. This is the second step of the post-translational modification of that lysine into an unusual amino acid residue named hypusine. Hypusination is unique to mature eIF-5A factor and is essential for its function. The protein is Deoxyhypusine hydroxylase (dohh) of Danio rerio (Zebrafish).